Reading from the N-terminus, the 244-residue chain is UL16-binding protein 1 (244 aa).

The signal sequence occupies residues 1–25; sequence MAAAASPAFLLCLPLLHLLSGWSRA. The interval 26 to 117 is MHC class I alpha-1 like; sequence GWVDTHCLCY…IQVENLIPIE (92 aa). Cysteines 50 and 66 form a disulfide. N82 carries an N-linked (GlcNAc...) asparagine glycan. An MHC class I alpha-2 like region spans residues 118-208; the sequence is PLTLQARMSC…MYWEQMLDPT (91 aa). Residues C127 and C190 are joined by a disulfide bond. G216 carries the GPI-anchor amidated glycine lipid modification. Residues 217–244 constitute a propeptide, removed in mature form; it reads TTQPKAMATTLSPWSLLIIFLCFILAGR.

This sequence belongs to the MHC class I family. As to quaternary structure, interacts with KLRK1/NKG2D. Does not bind to beta2-microglobulin. (Microbial infection) In CMV-infected cells, interacts with the viral glycoprotein UL16; this interaction causes ULBP1 retention in the endoplasmic reticulum and cis-Golgi and prevents binding to and activation of KLRK1/NKG2D, providing CMV with an immune evasion mechanism. In terms of tissue distribution, expressed in T-cells, B-cells, erythroleukemia cell lines and in a wide range of tissues including heart, brain, lung, liver, testis, lymph node, thymus, tonsil and bone marrow. Also found in fetal heart, brain, lung and liver.

Its subcellular location is the cell membrane. It is found in the endoplasmic reticulum. Functionally, binds and activates the KLRK1/NKG2D receptor, mediating natural killer cell cytotoxicity. The protein is UL16-binding protein 1 (ULBP1) of Homo sapiens (Human).